The primary structure comprises 633 residues: MSSNNNTNTAPANANSSHHHHHHHHHHHHHGHGGSNSTLNNPKSSLADGAHIGNYQIVKTLGEGSFGKVKLAYHTTTGQKVALKIINKKVLAKSDMQGRIEREISYLRLLRHPHIIKLYDVIKSKDEIIMVIEYAGNELFDYIVQRDKMSEQEARRFFQQIISAVEYCHRHKIVHRDLKPENLLLDEHLNVKIADFGLSNIMTDGNFLKTSCGSPNYAAPEVISGKLYAGPEVDVWSCGVILYVMLCRRLPFDDESIPVLFKNISNGVYTLPKFLSPGAAGLIKRMLIVNPLNRISIHEIMQDDWFKVDLPEYLLPPDLKPHPEEENENNDSKKDGSSPDNDEIDDNLVNILSSTMGYEKDEIYESLESSEDTPAFNEIRDAYMLIKENKSLIKDMKANKSVSDELDTFLSQSPPTFQQQSKSHQKSQVDHETAKQHARRMASAITQQRTYHQSPFMDQYKEEDSTVSILPTSLPQIHRANMLAQGSPAASKISPLVTKKSKTRWHFGIRSRSYPLDVMGEIYIALKNLGAEWAKPSEEDLWTIKLRWKYDIGNKTNTNEKIPDLMKMVIQLFQIETNNYLVDFKFDGWESSYGDDTTVSNISEDEMSTFSAYPFLHLTTKLIMELAVNSQSN.

Residues methionine 1–serine 16 show a composition bias toward low complexity. Residues methionine 1–leucine 46 are disordered. A compositionally biased stretch (basic residues) spans serine 17–histidine 32. In terms of domain architecture, Protein kinase spans tyrosine 55–phenylalanine 306. ATP contacts are provided by residues leucine 61–valine 69 and lysine 84. Aspartate 177 (proton acceptor) is an active-site residue. Phosphothreonine; by autocatalysis is present on threonine 210. An auto-inhibitory domain (AID) region spans residues tyrosine 313–leucine 392. The disordered stretch occupies residues proline 317–aspartate 345. Residues leucine 319–serine 337 show a composition bias toward basic and acidic residues. A UBA domain is found at leucine 348–asparagine 389. The tract at residues phenylalanine 409–alanine 434 is disordered. A Phosphoserine modification is found at serine 413. Lysine 461 is covalently cross-linked (Glycyl lysine isopeptide (Lys-Gly) (interchain with G-Cter in ubiquitin)). A Phosphoserine modification is found at serine 487. A Glycyl lysine isopeptide (Lys-Gly) (interchain with G-Cter in SUMO) cross-link involves residue lysine 549. Serine 632 is subject to Phosphoserine.

The protein belongs to the protein kinase superfamily. CAMK Ser/Thr protein kinase family. SNF1 subfamily. In terms of assembly, component of the AMP-activated protein kinase complex also known as the SNF1 kinase complex (Snf1c), a heterotrimeric complex composed of an alpha subunit (SNF1), a regulatory subunit beta (GAL83 and substoichiometric alternate beta subunits SIP1 and SIP2), and a regulatory subunit gamma (SNF4). Interacts with the transcriptional activator SIP4. Interacts with SAK1. Interacts with CTK1: Interacts with adenylate cyclase CYR1. Phosphorylation at Thr-210 in response to glucose limitation leads to activation of kinase activity. ADP, but not AMP, protects the enzyme from dephosphorylation at Thr-210 by GLC7. Post-translationally, sumoylation by the SUMO (E3) ligase MMS21 leads to inhibition by interaction of SUMO attached to Lys-549 with a SUMO-interacting sequence motif located near the active site of SNF1, and by targeting SNF1 for glucose-induced destruction via the SLX5-SLX8 (SUMO-directed) ubiquitin ligase.

The protein resides in the cytoplasm. The protein localises to the nucleus. Its subcellular location is the nucleus membrane. It catalyses the reaction L-seryl-[protein] + ATP = O-phospho-L-seryl-[protein] + ADP + H(+). It carries out the reaction L-threonyl-[protein] + ATP = O-phospho-L-threonyl-[protein] + ADP + H(+). With respect to regulation, the kinase activity is positively regulated by SNF4 via sequestration of the SNF1 auto-inhibitory domain (AID). Serine/threonine protein kinase essential for release from glucose repression. Catalytic subunit of the AMP-activated protein kinase complex also known as the SNF1 kinase complex (Snf1c), a central regulator of cellular energy homeostasis, which, in response to a fall in intracellular ATP levels, activates energy-producing pathways and inhibits energy-consuming processes. The complex phosphorylates histone H3 to form H3S10ph, which promotes H3K14ac formation, leading to transcriptional activation through TBP recruitment to the promoters. The complex also negatively regulates the HOG1 MAPK pathway in ER stress response including unfolded protein response (UPR). Under nutrient/energy depletion, the complex phosphorylates and activates PAS kinase PSK1 which in turn activates PBS1, leading to the inhibition of the TORC1 signaling pathway. SNF1 also interacts and phosphorylates adenylate cyclase CYR1 and negatively regulates the protein kinase A signaling pathway. Also phosphorylates and regulates the transcriptional activator CAT8. The polypeptide is Carbon catabolite-derepressing protein kinase (Saccharomyces cerevisiae (strain ATCC 204508 / S288c) (Baker's yeast)).